Here is a 283-residue protein sequence, read N- to C-terminus: MKHKIDVVKTLLDALPFIKKFSNEKIVVKYGGAAQTSAELKEQFAQDIVLLHLVGMKPIIVHGGGKSITQLLADLGVDTTFIDGQRVTTKEVMRIVEMVLSGEINKEIVSLLDNHGAKAIGISGKDGGFLKGMPKDFENFGYTGLIEDIDPEIVDNIIDDDAVPVIAPIAGSNILGHPGFNINADLAASRIAVALEARKILFLTDTPGVLDKEMELITNLSIEQTEALKEDGTIQGGMVPKVDACIEALRGGVKKAHIIDGRVEHSLLLEILTSSGVGTCIEL.

Substrate contacts are provided by residues glycine 64–glycine 65, arginine 86, and asparagine 181.

It belongs to the acetylglutamate kinase family. ArgB subfamily.

It is found in the cytoplasm. It catalyses the reaction N-acetyl-L-glutamate + ATP = N-acetyl-L-glutamyl 5-phosphate + ADP. It functions in the pathway amino-acid biosynthesis; L-arginine biosynthesis; N(2)-acetyl-L-ornithine from L-glutamate: step 2/4. In terms of biological role, catalyzes the ATP-dependent phosphorylation of N-acetyl-L-glutamate. The sequence is that of Acetylglutamate kinase from Sulfurovum sp. (strain NBC37-1).